The primary structure comprises 475 residues: Bystin (475 aa).

2 stretches are compositionally biased toward basic residues: residues 1–12 (MGKDVKKVHKLR) and 29–41 (KPHKRVGKLRKKK). Disordered stretches follow at residues 1–57 (MGKD…ESVI) and 106–149 (DFID…QFGV). Acidic residues-rich tracts occupy residues 45-54 (ENDTGIDETE) and 107-119 (FIDDDDDDEDADQ).

This sequence belongs to the bystin family.

It is found in the nucleus. Its subcellular location is the nucleolus. In terms of biological role, required for processing of 20S pre-rRNA precursor and biogenesis of 40S ribosomal subunits. This is Bystin (bysl) from Dictyostelium discoideum (Social amoeba).